The following is a 377-amino-acid chain: Probable transposase for insertion sequence element IS5377 (377 aa).

Belongs to the transposase 11 family.

The chain is Probable transposase for insertion sequence element IS5377 from Geobacillus stearothermophilus (Bacillus stearothermophilus).